The primary structure comprises 525 residues: Lysine--tRNA ligase (525 aa).

The 'HIGH' region signature appears at 44-52 (PSGLPHIGT). The 'KMSKS' region signature appears at 290-294 (KISKS). Residue Lys-293 participates in ATP binding.

It belongs to the class-I aminoacyl-tRNA synthetase family.

The protein localises to the cytoplasm. It catalyses the reaction tRNA(Lys) + L-lysine + ATP = L-lysyl-tRNA(Lys) + AMP + diphosphate. The sequence is that of Lysine--tRNA ligase from Rickettsia felis (strain ATCC VR-1525 / URRWXCal2) (Rickettsia azadi).